The primary structure comprises 99 residues: Photosystem II reaction center Psb28 protein (99 aa).

It belongs to the Psb28 family. In terms of assembly, part of the photosystem II complex.

The protein localises to the cell inner membrane. This chain is Photosystem II reaction center Psb28 protein, found in Gloeobacter violaceus (strain ATCC 29082 / PCC 7421).